Here is a 347-residue protein sequence, read N- to C-terminus: Aromatic amino acid aminotransferase (347 aa).

Lys-214 carries the N6-(pyridoxal phosphate)lysine modification.

This sequence belongs to the class-II pyridoxal-phosphate-dependent aminotransferase family. Homodimer. Requires pyridoxal 5'-phosphate as cofactor.

The enzyme catalyses an aromatic L-alpha-amino acid + 2-oxoglutarate = an aromatic oxo-acid + L-glutamate. Its function is as follows. Aminotransferase that catalyzes the conversion of aromatic amino acids and 2-oxoglutarate into corresponding aromatic oxo acids and L-glutamate. The protein is Aromatic amino acid aminotransferase of Mycobacteroides abscessus (strain ATCC 19977 / DSM 44196 / CCUG 20993 / CIP 104536 / JCM 13569 / NCTC 13031 / TMC 1543 / L948) (Mycobacterium abscessus).